A 1530-amino-acid polypeptide reads, in one-letter code: MSSQGSPSVALSTTTVSSVAVQAGDSKIVIAVIKCGKWVQLQLAESQPNLLEIGSSQDETKKLLHDHELLLAKLKALEDRVWELLQEADKTAEENKDQSQVYDAMAETLGEAWAALVSMLERRTELLRLTSEFFENALEFAIKIDQAEDFLQNTHEFESAESLKSLLQLHEHHTKELLERSLALLNKSQQLTDFIEKFKCEGPNVNPELTQGAHSSCLKVDRLLELLQDRRRQLDKYLKQQWQELSQVLQICQWDQQENQVTCWFQKTIRNLQEQSLGSSLSDNEDRIHKQEELIIKAKEWNSAVEKLKSEALRILLSKDYVEKEHLQLSHQKLSQLQEEFGQLMVERNTWLKKANEFFNSANKAFDVLGRVEAYLKLLKSEGLSLAVLAVRHEELHRKIKDCTTDALQKGQTLISQVDSCSSQVSGIHEMMGCIKRRVDHLTEQCSAHKEYALKKQQLTASVEGYLRKVEMSIQKISPVLSNAMDVGSTRSESEKILNKYLELDIQAKETSHELEAAAKTMMEKNEFVSDEMVSLSSKARWLAEELNLFGQSIDYRSQVLQTYVAFLKSSEEVEMQFQSLKEFYETEIPQKEQDDAKAKHCSDSAEKQWQLFLKKSFITQDLGLEFLNLINMAKENEILDVKNEVYLMKNTMENQKAEREELSLLRLAWQLKATESKPGKQQWAAFKEQLKKTSHNLKLLQEALMPVSALDLGGSLQFILDLRQKWNDMKPQFQQLNDEVQYIMKESEELTGRGAPVKEKSQQLKDLIHFHQKQKERIQDYEDILYKVVQFHQVKEELGRLIKSRELEFVEQPKELGDAHDVQIHLRCSQEKQARVDHLHRLALSLGVDIISSVQRPHCSNVSAKNLQQQLELLEEDSMKWRAKAEEYGRTLSRSVEYCAMRDEINELKDSFKDIKKKFNNLKFNYTKKNEKSRNLKALKYQIQQVDMYAEKMQALKRKMEKVSNKTSDSFLNYPSDKVNVLLEVMKDLQKHVDDFDKVVTDYKKNLDLTEHFQEVIEECHFWYEDASATVVRVGKYSTECKTKEAVKILHQQFNKFIAPSVPQQEERIQEATDLAQHLYGLEEGQKYIEKIVTKHKEVLESVTELCESLTELEEKLKQGDVLKMNPNLEDFHYDYIDLLKEPAKNKQTIFNEERNKGQVQVADLLGINGTGEERLPQDLKVSTDKEGGVQDLLLPEDMLSGEEYECVSPDDISLPPLPGSPESPLAPSDMEVEEPVSSSLSLHISSYGVQAGTSSPGDAQESVLPPPVAFADACNDKRETFSSHFERPYLQFKAEPPLTSRGFVEKSTALHRISAEHPESMMSEVHERALQQHPQAQGGLLETREKMHADNNFTKTQDRLHASSDAFSGLRFQSGTSRGYQRQMVPREEIKSTSAKSSVVSLADQAPNFSRLLSNVTVMEGSPVTLEVEVTGFPEPTLTWYKKGQKLSADGHLQVLHKETRHSVFIPKVCKADAGLYVARAQNSSGALSSNVILHVTGNCRLPITRVNWITLCVVYVSVSLMYWLLTQ.

T91 is modified (phosphothreonine). 3 coiled-coil regions span residues 642-706, 758-783, and 861-970; these read VKNE…EALM, VKEK…QDYE, and SNVS…KTSD. The segment at 1210–1241 is disordered; it reads SPDDISLPPLPGSPESPLAPSDMEVEEPVSSS. In terms of domain architecture, Ig-like spans 1409 to 1530; the sequence is PNFSRLLSNV…VSLMYWLLTQ (122 aa).

As to quaternary structure, interacts with DISC1. Interacts preferentially with phosphorylated forms of myosin regulatory light chain (MRLC). Interacts (via the N-terminal region) with HDAC6; inhibits the deacetylase activity of HDAC6. Interacts with KIBRA (via the C-terminal region); retains AMPAR in the cytosol after internalization. Post-translationally, ubiquitinated and degradated by the CDC20-APC/C pathway. During brain development, CDC20-APC/C complex degrades CCDC141 after centrosome translocation into the dilated area. CCDC141 is restabilized in the dilation until the centrosome enters the dilation, at which point it is once again immediately destabilized by CDC20-APC/C complex. The oscillatory regulation of CCDC141 protein is needed for proper cortical migration. In terms of processing, phosphorylation at Thr-91 by PLK1 affects CCDC141 degradation.

The protein localises to the cytoplasm. Its subcellular location is the cytoskeleton. It localises to the microtubule organizing center. The protein resides in the centrosome. Its function is as follows. Plays a critical role in cortical radial and GnRH neurons migration during brain development. Regulates cortical radial migration by negatively controlling the activity of histone deacetylase 6 (HDAC6) and promotes centrosome maturation. CAMDI is required for dilation formation of cortical neurons during radial migration. Plays a critical role in learning and memory performance through regulation of AMPA-selective glutamate receptors (AMPARs) cell surface expression in competition with KIBRA. The protein is Coiled-coil domain-containing protein 141 (CCDC141) of Homo sapiens (Human).